We begin with the raw amino-acid sequence, 308 residues long: Homoserine O-acetyltransferase (308 aa).

Residue C142 is the Acyl-thioester intermediate of the active site. The substrate site is built by K163 and S192. H235 serves as the catalytic Proton acceptor. The active site involves E237. Position 249 (R249) interacts with substrate.

The protein belongs to the MetA family.

It is found in the cytoplasm. It catalyses the reaction L-homoserine + acetyl-CoA = O-acetyl-L-homoserine + CoA. The protein operates within amino-acid biosynthesis; L-methionine biosynthesis via de novo pathway; O-acetyl-L-homoserine from L-homoserine: step 1/1. Its function is as follows. Transfers an acetyl group from acetyl-CoA to L-homoserine, forming acetyl-L-homoserine. The sequence is that of Homoserine O-acetyltransferase from Agrobacterium fabrum (strain C58 / ATCC 33970) (Agrobacterium tumefaciens (strain C58)).